The sequence spans 668 residues: MAANMYRVGDYVYFENSSSNPYLVRRIEELNKTANGNVEAKVVCLFRRRDISSSLNSLADSNAREFEEESKQPGVSEQQRHQLKHRELFLSRQFESLPATHIRGKCSVTLLNETDILNQYLDKEDCFFYSLVFDPVQKTLLADQGEIRVGCKFQAEIPDRLAEGESDNRNQQKMEMKVWDPDNPLTDRQIDQFLVVARAVGTFARALDCSSSIRQPSLHMSAAAASRDITLFHAMDTLQRNGYDLAKAMSTLVPQGGPVLCRDEMEEWSASEAMLFEEALEKYGKDFNDIRQDFLPWKSLASIVQFYYMWKTTDRYIQQKRLKAAEADSKLKQVYIPTYTKPNPNQIISVGSKPGMNGAGFQKGLTCESCHTTQSAQWYAWGPPNMQCRLCASCWIYWKKYGGLKTPTQLEGAARGTTEPHSRGHLSRPEAQSLSPYTTSANRAKLLAKNRQTFLLQTTKLTRLARRMCRDLLQPRRAARRPYAPINANAIKAECSIRLPKAAKTPLKIHPLVRLPLATIVKDLVAQAPLKPKTPRGTKTPINRNQLTQNRGLGGIMVKRSYETMAGAGVPFSANGRPLASGIRSSSQPAAKRQKLNPADAPNPVVFVATKDTRALRKALTHLEMRRAARRPNLPLKVKPTLMTVRPPVPLPASSHPASTNEPIVLED.

The BAH domain occupies 1 to 144; it reads MAANMYRVGD…PVQKTLLADQ (144 aa). Phosphoserine occurs at positions 52 and 54. One can recognise an ELM2 domain in the interval 145 to 256; that stretch reads GEIRVGCKFQ…KAMSTLVPQG (112 aa). At Lys152 the chain carries N6-acetyllysine. The SANT domain occupies 263-315; that stretch reads DEMEEWSASEAMLFEEALEKYGKDFNDIRQDFLPWKSLASIVQFYYMWKTTDR. The segment at 367 to 394 adopts a GATA-type; atypical zinc-finger fold; it reads CESCHTTQSAQWYAWGPPNMQCRLCASC. A disordered region spans residues 412–437; the sequence is GAARGTTEPHSRGHLSRPEAQSLSPY. Phosphoserine is present on residues Ser433 and Ser435. N6-acetyllysine is present on Lys460. Lys492 participates in a covalent cross-link: Glycyl lysine isopeptide (Lys-Gly) (interchain with G-Cter in SUMO2 and SUMO3); alternate. Residue Lys492 forms a Glycyl lysine isopeptide (Lys-Gly) (interchain with G-Cter in SUMO2); alternate linkage. A Glycyl lysine isopeptide (Lys-Gly) (interchain with G-Cter in SUMO2) cross-link involves residue Lys508. Lys522 and Lys531 each carry N6-acetyllysine. Thr534 bears the Phosphothreonine mark. Residues Lys559 and Lys595 each participate in a glycyl lysine isopeptide (Lys-Gly) (interchain with G-Cter in SUMO2) cross-link. Disordered stretches follow at residues 580-599 and 647-668; these read ASGIRSSSQPAAKRQKLNPA and PPVPLPASSHPASTNEPIVLED.

Belongs to the metastasis-associated protein family. In terms of assembly, component of the nucleosome remodeling and deacetylase (NuRD) repressor complex, composed of core proteins MTA1, MTA2, MTA3, RBBP4, RBBP7, HDAC1, HDAC2, MBD2, MBD3, and peripherally associated proteins CDK2AP1, CDK2AP2, GATAD2A, GATAD2B, CHD3, CHD4 and CHD5. The exact stoichiometry of the NuRD complex is unknown, and some subunits such as MBD2 and MBD3, GATAD2A and GATAD2B, and CHD3, CHD4 and CHD5 define mutually exclusive NuRD complexes. Interacts with CHD3. Interacts with CHD4. Interacts with GATAD2A. Interacts with HDAC7. Interacts with MBD3. Interacts with p53/TP53. Interacts with MINT. Interacts with PIMREG. Interacts with NACC2. Interacts with ERCC6. Interacts with PWWP2B. Interacts with transcription factor BCL11A.

Its subcellular location is the nucleus. Its function is as follows. May function as a transcriptional coregulator. Acts as a component of the histone deacetylase NuRD complex which participates in the remodeling of chromatin. The polypeptide is Metastasis-associated protein MTA2 (Mta2) (Mus musculus (Mouse)).